We begin with the raw amino-acid sequence, 186 residues long: Peptidyl-tRNA hydrolase (186 aa).

Residue Y14 coordinates tRNA. H19 (proton acceptor) is an active-site residue. The tRNA site is built by F64, N66, and N112.

It belongs to the PTH family. As to quaternary structure, monomer.

It is found in the cytoplasm. It catalyses the reaction an N-acyl-L-alpha-aminoacyl-tRNA + H2O = an N-acyl-L-amino acid + a tRNA + H(+). Hydrolyzes ribosome-free peptidyl-tRNAs (with 1 or more amino acids incorporated), which drop off the ribosome during protein synthesis, or as a result of ribosome stalling. Functionally, catalyzes the release of premature peptidyl moieties from peptidyl-tRNA molecules trapped in stalled 50S ribosomal subunits, and thus maintains levels of free tRNAs and 50S ribosomes. This is Peptidyl-tRNA hydrolase from Listeria monocytogenes serotype 4b (strain CLIP80459).